A 259-amino-acid chain; its full sequence is MVKSKYLVFISVFSLLFGVFVVGFSHQGVKAEEERPMGTAFYESFDAFDDERWSKAGVWTNGQMFNATWYPEQVTADGLMRLTIAKKTTSARNYKAGELRTNDFYHYGLFEVSMKPAKVEGTVSSFFTYTGEWDWDGDPWDEIDIEFLGKDTTRIQFNYFTNGVGGNEFYYDLGFDASESFNTYAFEWREDSITWYVNGEAVHTATENIPQTPQKIMMNLWPGVGVDGWTGVFDGDNTPVYSYYDWVRYTPLQNYQIHQ.

A signal peptide spans 1 to 31 (MVKSKYLVFISVFSLLFGVFVVGFSHQGVKA). One can recognise a GH16 domain in the interval 35-255 (RPMGTAFYES…WVRYTPLQNY (221 aa)). E142 (nucleophile) is an active-site residue. E146 acts as the Proton donor in catalysis.

This sequence belongs to the glycosyl hydrolase 16 family.

The enzyme catalyses Hydrolysis of (1-&gt;4)-beta-D-glucosidic linkages in beta-D-glucans containing (1-&gt;3)- and (1-&gt;4)-bonds.. In terms of biological role, hydrolyzes B-glucans containing mixed beta-1,3 and beta-1,4 linkages. The chain is Beta-glucanase (bglBB) from Brevibacillus brevis (Bacillus brevis).